Consider the following 922-residue polypeptide: Coronin-7 (922 aa).

WD repeat units lie at residues 75-115 (CHSD…EALP), 124-163 (PEELPVDVLQFHPTADGVLVSTAGRTVKVWDVAKQQHLTE), 166-205 (AHKDLVQSAVWSRDGATVGTACKDKQLRIFDPRARAQASQ), and 209-253 (AHEN…SALA). The tract at residues 386–462 (NPAHRPHPRF…TSPSQRSLQS (77 aa)) is disordered. Residues 423–456 (SEGFSSPSSLVSPSTPSSLGLSLSSTSGIGTSPS) are compositionally biased toward low complexity. Ser459 and Ser462 each carry phosphoserine. Lys469 is covalently cross-linked (Glycyl lysine isopeptide (Lys-Gly) (interchain with G-Cter in ubiquitin)). WD repeat units follow at residues 539–579 (QNGA…LKNV), 589–629 (GHTE…EQLR), 632–671 (GHQDQIFSLAWSPDGKQLATVCKDGRVRVYDPRSSPLPLQ), and 725–765 (DVAP…PFFL). The disordered stretch occupies residues 854 to 922 (LQPPGMTPVS…FEGVDEDEWD (69 aa)). A Phosphothreonine modification is found at Thr874. Basic and acidic residues predominate over residues 881–893 (LEEKSDQQKKEEL). Ser912 bears the Phosphoserine mark.

This sequence belongs to the WD repeat coronin family. As to quaternary structure, interacts with clathrin adapter AP1 complex. This interaction takes place at Golgi membranes and not AP1-positive endosomal membranes. Interacts (when ubiquitinated at Lys-469) with EPS15. The membrane-associated form is phosphorylated on tyrosine residues. Post-translationally, ubiquitinated via 'Lys-33'-linked ubiquitin chains by the BCR(KLHL20) E3 ubiquitin ligase complex: 'Lys-33'-linked ubiquitination promotes interaction with EPS15 and facilitates actin polymerization at the trans-Golgi network, thereby facilitating post-Golgi trafficking. Deubiquitinated by ZRANB1/TRABID.

It localises to the golgi apparatus membrane. The protein resides in the golgi apparatus. Its subcellular location is the trans-Golgi network. It is found in the cytoplasmic vesicle. The protein localises to the cytoplasm. It localises to the cytosol. Its function is as follows. F-actin regulator involved in anterograde Golgi to endosome transport: upon ubiquitination via 'Lys-33'-linked ubiquitin chains by the BCR(KLHL20) E3 ubiquitin ligase complex, interacts with EPS15 and localizes to the trans-Golgi network, where it promotes actin polymerization, thereby facilitating post-Golgi trafficking. May play a role in the maintenance of the Golgi apparatus morphology. In Rattus norvegicus (Rat), this protein is Coronin-7 (Coro7).